Consider the following 413-residue polypeptide: Serine hydroxymethyltransferase (413 aa).

(6S)-5,6,7,8-tetrahydrofolate contacts are provided by residues Leu119 and 123–125 (GHL). Position 228 is an N6-(pyridoxal phosphate)lysine (Lys228).

Belongs to the SHMT family. In terms of assembly, homodimer. Pyridoxal 5'-phosphate serves as cofactor.

It localises to the cytoplasm. It carries out the reaction (6R)-5,10-methylene-5,6,7,8-tetrahydrofolate + glycine + H2O = (6S)-5,6,7,8-tetrahydrofolate + L-serine. Its pathway is one-carbon metabolism; tetrahydrofolate interconversion. It participates in amino-acid biosynthesis; glycine biosynthesis; glycine from L-serine: step 1/1. Its function is as follows. Catalyzes the reversible interconversion of serine and glycine with tetrahydrofolate (THF) serving as the one-carbon carrier. This reaction serves as the major source of one-carbon groups required for the biosynthesis of purines, thymidylate, methionine, and other important biomolecules. Also exhibits THF-independent aldolase activity toward beta-hydroxyamino acids, producing glycine and aldehydes, via a retro-aldol mechanism. The protein is Serine hydroxymethyltransferase of Desulfatibacillum aliphaticivorans.